The chain runs to 317 residues: Putative AP2/ERF and B3 domain-containing protein Os01g0140700 (317 aa).

Positions 1 to 37 (MEQEAAMVVFSCNSGSGGSSSTTDSKQEEEEEEELAA) are disordered. Over residues 27-37 (QEEEEEEELAA) the composition is skewed to acidic residues. Positions 66 to 121 (RYKGVVPQPNGRWGAQIYERHARVWLGTFPDEEAAARAYDVAALRFRGRDAVTNRA) form a DNA-binding region, AP2/ERF. A DNA-binding region (TF-B3) is located at residues 178–287 (FEKAVTPSDV…EKHLLIDCKK (110 aa)).

The protein resides in the nucleus. The protein is Putative AP2/ERF and B3 domain-containing protein Os01g0140700 of Oryza sativa subsp. japonica (Rice).